A 126-amino-acid chain; its full sequence is Protein ApaG (126 aa).

Residues 2 to 126 enclose the ApaG domain; the sequence is SALDTSIRVE…FRLTTPGLLH (125 aa).

In Shewanella baltica (strain OS195), this protein is Protein ApaG.